The sequence spans 478 residues: ATP synthase subunit beta (478 aa).

158 to 165 (GGAGVGKT) provides a ligand contact to ATP.

This sequence belongs to the ATPase alpha/beta chains family. In terms of assembly, F-type ATPases have 2 components, CF(1) - the catalytic core - and CF(0) - the membrane proton channel. CF(1) has five subunits: alpha(3), beta(3), gamma(1), delta(1), epsilon(1). CF(0) has three main subunits: a(1), b(2) and c(9-12). The alpha and beta chains form an alternating ring which encloses part of the gamma chain. CF(1) is attached to CF(0) by a central stalk formed by the gamma and epsilon chains, while a peripheral stalk is formed by the delta and b chains.

Its subcellular location is the cell inner membrane. It catalyses the reaction ATP + H2O + 4 H(+)(in) = ADP + phosphate + 5 H(+)(out). Its function is as follows. Produces ATP from ADP in the presence of a proton gradient across the membrane. The catalytic sites are hosted primarily by the beta subunits. The protein is ATP synthase subunit beta of Rhizobium johnstonii (strain DSM 114642 / LMG 32736 / 3841) (Rhizobium leguminosarum bv. viciae).